A 161-amino-acid polypeptide reads, in one-letter code: Cytochrome c-type biogenesis protein CcmE (161 aa).

Residues 1–8 (MNPRRKKR) are Cytoplasmic-facing. Residues 9–29 (LGLILALFVGISATVGLMLYA) form a helical; Signal-anchor for type II membrane protein membrane-spanning segment. The Periplasmic segment spans residues 30-161 (LNQNMDLFYT…TEQQKQGTGQ (132 aa)). The heme site is built by His-129 and Tyr-133. The segment at 142–161 (MKKTHEPLQYTEQQKQGTGQ) is disordered. The segment covering 151 to 161 (YTEQQKQGTGQ) has biased composition (polar residues).

It belongs to the CcmE/CycJ family.

The protein resides in the cell inner membrane. In terms of biological role, heme chaperone required for the biogenesis of c-type cytochromes. Transiently binds heme delivered by CcmC and transfers the heme to apo-cytochromes in a process facilitated by CcmF and CcmH. In Aliivibrio fischeri (strain ATCC 700601 / ES114) (Vibrio fischeri), this protein is Cytochrome c-type biogenesis protein CcmE.